Consider the following 774-residue polypeptide: 5-methyltetrahydropteroyltriglutamate--homocysteine methyltransferase (774 aa).

5-methyltetrahydropteroyltri-L-glutamate-binding positions include 15 to 18 (RELK) and K116. L-homocysteine contacts are provided by residues 445 to 447 (IGS) and E498. L-methionine is bound by residues 445–447 (IGS) and E498. 5-methyltetrahydropteroyltri-L-glutamate is bound by residues 529-530 (RC) and W575. D613 lines the L-homocysteine pocket. D613 serves as a coordination point for L-methionine. Position 619 (E619) interacts with 5-methyltetrahydropteroyltri-L-glutamate. H655, C657, and E679 together coordinate Zn(2+). The active-site Proton donor is H708. Residue C740 participates in Zn(2+) binding.

This sequence belongs to the vitamin-B12 independent methionine synthase family. The cofactor is Zn(2+).

It carries out the reaction 5-methyltetrahydropteroyltri-L-glutamate + L-homocysteine = tetrahydropteroyltri-L-glutamate + L-methionine. It functions in the pathway amino-acid biosynthesis; L-methionine biosynthesis via de novo pathway; L-methionine from L-homocysteine (MetE route): step 1/1. In terms of biological role, catalyzes the transfer of a methyl group from 5-methyltetrahydrofolate to homocysteine resulting in methionine formation. This chain is 5-methyltetrahydropteroyltriglutamate--homocysteine methyltransferase, found in Flavobacterium johnsoniae (strain ATCC 17061 / DSM 2064 / JCM 8514 / BCRC 14874 / CCUG 350202 / NBRC 14942 / NCIMB 11054 / UW101) (Cytophaga johnsonae).